A 410-amino-acid polypeptide reads, in one-letter code: Phosphoglycerate kinase (410 aa).

Residues 19 to 21, R34, 57 to 60, R114, and R154 contribute to the substrate site; these read DLN and HQGK. ATP-binding positions include E332 and 358–361; that span reads GGHS.

This sequence belongs to the phosphoglycerate kinase family. In terms of assembly, homodimer.

Its subcellular location is the cytoplasm. It catalyses the reaction (2R)-3-phosphoglycerate + ATP = (2R)-3-phospho-glyceroyl phosphate + ADP. The protein operates within carbohydrate degradation; glycolysis; pyruvate from D-glyceraldehyde 3-phosphate: step 2/5. This is Phosphoglycerate kinase (pgk) from Pyrococcus abyssi (strain GE5 / Orsay).